Reading from the N-terminus, the 131-residue chain is Profilin-10 (131 aa).

Cys-13 and Cys-115 are joined by a disulfide. An Involved in PIP2 interaction motif is present at residues 81–97 (AVIRGKKGSGGITVKKT). Thr-111 carries the phosphothreonine modification.

This sequence belongs to the profilin family. As to quaternary structure, occurs in many kinds of cells as a complex with monomeric actin in a 1:1 ratio. Phosphorylated by MAP kinases.

Its subcellular location is the cytoplasm. It is found in the cytoskeleton. Its function is as follows. Binds to actin and affects the structure of the cytoskeleton. At high concentrations, profilin prevents the polymerization of actin, whereas it enhances it at low concentrations. In Zea mays (Maize), this protein is Profilin-10.